The chain runs to 113 residues: Replication initiation control protein YabA (113 aa).

4 residues coordinate Zn(2+): histidine 88, cysteine 90, cysteine 104, and cysteine 107.

Belongs to the YabA family. Homotetramer. Interacts with both DnaA and DnaN, acting as a bridge between these two proteins. The cofactor is Zn(2+).

Its subcellular location is the cytoplasm. The protein localises to the nucleoid. Involved in control of chromosome replication initiation. Inhibits the cooperative binding of DnaA to the oriC region, thus negatively regulating initiation of chromosome replication. Inhibits the ability of DnaA-ATP to form a helix on DNA; does not disassemble preformed DnaA-DNA helices. Decreases the residence time of DnaA on the chromosome at its binding sites (oriC, replication forks and promoter-binding sites). Tethers DnaA to the replication machinery via the DNA polymerase beta sliding clamp subunit (dnaN). Associates with oriC and other DnaA targets on the chromosome in a DnaA-dependent manner. The polypeptide is Replication initiation control protein YabA (Staphylococcus saprophyticus subsp. saprophyticus (strain ATCC 15305 / DSM 20229 / NCIMB 8711 / NCTC 7292 / S-41)).